Reading from the N-terminus, the 196-residue chain is Imidazoleglycerol-phosphate dehydratase (196 aa).

This sequence belongs to the imidazoleglycerol-phosphate dehydratase family.

It is found in the cytoplasm. It carries out the reaction D-erythro-1-(imidazol-4-yl)glycerol 3-phosphate = 3-(imidazol-4-yl)-2-oxopropyl phosphate + H2O. It participates in amino-acid biosynthesis; L-histidine biosynthesis; L-histidine from 5-phospho-alpha-D-ribose 1-diphosphate: step 6/9. This is Imidazoleglycerol-phosphate dehydratase from Acidiphilium cryptum (strain JF-5).